We begin with the raw amino-acid sequence, 385 residues long: 2-oxoglutarate-dependent dioxygenase AFUA_1G01000 (385 aa).

The region spanning 203–327 (PSDDFLRLLR…RYSVLVGTRP (125 aa)) is the Fe2OG dioxygenase domain. Fe cation-binding residues include His230, Asp232, and His304. Arg318 is a binding site for 2-oxoglutarate.

Belongs to the iron/ascorbate-dependent oxidoreductase family. Requires Fe(2+) as cofactor.

2-oxoglutarate-dependent dioxygenase; part of the gene cluster that mediates the biosynthesis of fumigermin that inhibits germination of spores of the inducing S.rapamycinicus, and thus helps the fungus to defend resources in the shared habitat against a bacterial competitor. The partially reducing polyketide synthase fngA alone is sufficient for the production of fumigermin. FgnA catalyzes the condensation of 3 malonyl-CoA units to an acetyl-CoA starter, and 3 methylations to yield fumigermin. It is remarkable that the five cluster genes including fgnA are conserved in distantly related fungi, supporting the assumption of a fumigermin cluster; it is thus possible that originally all five genes were functional, but that the genes encoding tailoring enzymes became inactive from mutations, similar to the case of the fgnA gene in strains A1163 and Af293. The polypeptide is 2-oxoglutarate-dependent dioxygenase AFUA_1G01000 (Aspergillus fumigatus (strain ATCC MYA-4609 / CBS 101355 / FGSC A1100 / Af293) (Neosartorya fumigata)).